The sequence spans 203 residues: SCO2-like protein RT0576 (203 aa).

Residues 42-203 (KDNIKIGEAF…KEIMEFLRNE (162 aa)) form the Thioredoxin domain. Residues C80, C84, and H170 each coordinate Cu cation.

It belongs to the SCO1/2 family.

The protein is SCO2-like protein RT0576 of Rickettsia typhi (strain ATCC VR-144 / Wilmington).